Here is a 179-residue protein sequence, read N- to C-terminus: Adenine phosphoribosyltransferase (179 aa).

It belongs to the purine/pyrimidine phosphoribosyltransferase family. Homodimer.

The protein resides in the cytoplasm. The enzyme catalyses AMP + diphosphate = 5-phospho-alpha-D-ribose 1-diphosphate + adenine. Its pathway is purine metabolism; AMP biosynthesis via salvage pathway; AMP from adenine: step 1/1. Its function is as follows. Catalyzes a salvage reaction resulting in the formation of AMP, that is energically less costly than de novo synthesis. This Helicobacter acinonychis (strain Sheeba) protein is Adenine phosphoribosyltransferase.